The sequence spans 937 residues: Calsyntenin-2 (937 aa).

The signal sequence occupies residues 1–22 (MKMRAITAMLLLVLSGQCGILA). The Extracellular segment spans residues 23–818 (GKVNKHKPWI…NSDHISGTPP (796 aa)). 2 consecutive Cadherin domains span residues 32–148 (IETS…SPVF) and 149–249 (REPL…KPGW). N86 carries an N-linked (GlcNAc...) asparagine glycan. N-linked (GlcNAc...) asparagine glycosylation is found at N330, N365, and N716. A helical membrane pass occupies residues 819–839 (AATVVIVMCIAALVVIVVLGI). The Cytoplasmic portion of the chain corresponds to 840–937 (YRIHTTHQDS…LEWDPSTLPY (98 aa)). The tract at residues 846 to 937 (HQDSSKEDEE…LEWDPSTLPY (92 aa)) is disordered. The segment covering 865–874 (DNSNLNSIEG) has biased composition (polar residues). Composition is skewed to acidic residues over residues 881-900 (VREE…DDLA) and 907-917 (ESEDSDEDEET).

This sequence belongs to the calsyntenin family. As to quaternary structure, homooligomer and heterooligomer; mediates both homophilic and heterophilc interactions with clstn1 and clstn3 paralogs via cadherin domains. By 48 hours post-fertilization (hpf), widely expressed in the brain, with strong expression in the telencephalon and the midbrain.

The protein localises to the postsynaptic cell membrane. It is found in the endoplasmic reticulum membrane. It localises to the golgi apparatus membrane. The protein resides in the cell projection. Its subcellular location is the dendrite. Postsynaptic adhesion molecule. Promotes synapse development by acting as a cell adhesion molecule at the postsynaptic membrane, which associates with presynaptic neurexins. The polypeptide is Calsyntenin-2 (clstn2a) (Danio rerio (Zebrafish)).